The following is a 149-amino-acid chain: MNKGQRHIKIREIIANNDVETQDELVEQLKAAGYNVTQATVSRDIKELHLVKVPMMDGRYKYSLPADQRFNPLQKLKRGLVDSFVSIDRTDNLIVMKTLPGNAHAIGALIDNLDWTEIMGTICGDDTILIICKDKQDGPVVTERFLNML.

The protein belongs to the ArgR family.

It is found in the cytoplasm. Its pathway is amino-acid biosynthesis; L-arginine biosynthesis [regulation]. In terms of biological role, regulates arginine biosynthesis genes. This chain is Arginine repressor, found in Halalkalibacterium halodurans (strain ATCC BAA-125 / DSM 18197 / FERM 7344 / JCM 9153 / C-125) (Bacillus halodurans).